Here is a 422-residue protein sequence, read N- to C-terminus: Ornithine decarboxylase (422 aa).

N6-(pyridoxal phosphate)lysine is present on lysine 71. Residues serine 203, glycine 240, and 275 to 278 (EPGR) contribute to the pyridoxal 5'-phosphate site. 331 to 332 (FD) contacts substrate. Residue cysteine 359 is the Proton donor; shared with dimeric partner of the active site. Aspartate 360 serves as a coordination point for substrate. Tyrosine 388 contacts pyridoxal 5'-phosphate.

Belongs to the Orn/Lys/Arg decarboxylase class-II family. In terms of assembly, homodimer. Only the dimer is catalytically active, as the active sites are constructed of residues from both monomers. Requires pyridoxal 5'-phosphate as cofactor.

It carries out the reaction L-ornithine + H(+) = putrescine + CO2. It functions in the pathway amine and polyamine biosynthesis; putrescine biosynthesis via L-ornithine pathway; putrescine from L-ornithine: step 1/1. Its activity is regulated as follows. Inhibited by antizyme (AZ) in response to polyamine levels. AZ inhibits the assembly of the functional homodimer by binding to ODC monomers and targeting them for ubiquitin-independent proteolytic destruction by the 26S proteasome. In terms of biological role, catalyzes the first and rate-limiting step of polyamine biosynthesis that converts ornithine into putrescine, which is the precursor for the polyamines, spermidine and spermine. Polyamines are essential for cell proliferation and are implicated in cellular processes, ranging from DNA replication to apoptosis. This chain is Ornithine decarboxylase, found in Caenorhabditis elegans.